A 250-amino-acid polypeptide reads, in one-letter code: MMSFSLLSIVSIALAATVSATSDGTNAYTAYPSVAKTASINGFADKIYDQLPECAKECVKQSTSNTPCPYWDTGCLCVMPQFGGAIGDCVAKNCKGKEVDSVESLATSICSSAGVGEPYWMIPSSVSDALAKAANAASATTSVETATKSAAAELATTSDTTIVASTSHESKVAETSVAQQTASTEKSSAAETSRAKETSKAEESSKAEETSVAQSSSSANVASVSAETANAGNMPVIAIGGVIAAFAALI.

Positions 1-20 are cleaved as a signal peptide; the sequence is MMSFSLLSIVSIALAATVSA. The 112-residue stretch at 26-137 folds into the CFEM domain; the sequence is NAYTAYPSVA…DALAKAANAA (112 aa). Cystine bridges form between Cys-54/Cys-94, Cys-58/Cys-89, Cys-68/Cys-75, and Cys-77/Cys-110. Asp-72 provides a ligand contact to heme. Residues 165–219 form a disordered region; sequence STSHESKVAETSVAQQTASTEKSSAAETSRAKETSKAEESSKAEETSVAQSSSSA. The segment covering 178–192 has biased composition (low complexity); it reads AQQTASTEKSSAAET. Residues 193-209 show a composition bias toward basic and acidic residues; it reads SRAKETSKAEESSKAEE. Positions 210–219 are enriched in low complexity; the sequence is TSVAQSSSSA. Asn-230 is lipidated: GPI-anchor amidated asparagine. Positions 231-250 are cleaved as a propeptide — removed in mature form; sequence AGNMPVIAIGGVIAAFAALI.

It belongs to the RBT5 family. In terms of processing, the GPI-anchor is attached to the protein in the endoplasmic reticulum and serves to target the protein to the cell surface. There, the glucosamine-inositol phospholipid moiety is cleaved off and the GPI-modified mannoprotein is covalently attached via its lipidless GPI glycan remnant to the 1,6-beta-glucan of the outer cell wall layer. Mannosylated.

It localises to the secreted. The protein localises to the cell wall. Its subcellular location is the cell membrane. In terms of biological role, heme-binding protein involved in heme-iron utilization. The ability to acquire iron from host tissues is a major virulence factor of pathogenic microorganisms. Involved in biofilm formation. The polypeptide is GPI-anchored hemophore PGA10 (Candida albicans (strain SC5314 / ATCC MYA-2876) (Yeast)).